We begin with the raw amino-acid sequence, 326 residues long: Vitamin B12 import system permease protein BtuC (326 aa).

Transmembrane regions (helical) follow at residues 19–39 (LSVL…LWIL), 61–81 (LAVL…QALF), 88–108 (PGLL…VLLG), 112–132 (LPNW…TLIL), 146–166 (LLAG…AIYF), 184–204 (GGVD…LLWI), 240–260 (GWMV…GLVI), 274–294 (VLLP…DIVA), and 302–322 (ELPI…WLLL).

Belongs to the binding-protein-dependent transport system permease family. FecCD subfamily. In terms of assembly, the complex is composed of two ATP-binding proteins (BtuD), two transmembrane proteins (BtuC) and a solute-binding protein (BtuF).

The protein localises to the cell inner membrane. In terms of biological role, part of the ABC transporter complex BtuCDF involved in vitamin B12 import. Involved in the translocation of the substrate across the membrane. The chain is Vitamin B12 import system permease protein BtuC from Escherichia coli O127:H6 (strain E2348/69 / EPEC).